The following is a 77-amino-acid chain: MKLIIFTGLVLFAIVSLIEAQAENERACLPQYQVCTDAPGNCCSNLVCDCYGRYKSGTRIGRNCFCLQKGVIYKREN.

The signal sequence occupies residues 1-20 (MKLIIFTGLVLFAIVSLIEA). Residues 21-26 (QAENER) constitute a propeptide that is removed on maturation.

The protein belongs to the neurotoxin 19 (CSTX) family. 08 (U8-Lctx) subfamily. In terms of processing, contains 4 disulfide bonds. Expressed by the venom gland.

Its subcellular location is the secreted. This is U8-lycotoxin-Ls1s from Lycosa singoriensis (Wolf spider).